The sequence spans 162 residues: Crossover junction endodeoxyribonuclease RuvC (162 aa).

Residues Asp-7, Glu-67, and Asp-140 contribute to the active site. Residues Asp-7, Glu-67, and Asp-140 each coordinate Mg(2+).

This sequence belongs to the RuvC family. In terms of assembly, homodimer which binds Holliday junction (HJ) DNA. The HJ becomes 2-fold symmetrical on binding to RuvC with unstacked arms; it has a different conformation from HJ DNA in complex with RuvA. In the full resolvosome a probable DNA-RuvA(4)-RuvB(12)-RuvC(2) complex forms which resolves the HJ. Mg(2+) serves as cofactor.

Its subcellular location is the cytoplasm. It catalyses the reaction Endonucleolytic cleavage at a junction such as a reciprocal single-stranded crossover between two homologous DNA duplexes (Holliday junction).. The RuvA-RuvB-RuvC complex processes Holliday junction (HJ) DNA during genetic recombination and DNA repair. Endonuclease that resolves HJ intermediates. Cleaves cruciform DNA by making single-stranded nicks across the HJ at symmetrical positions within the homologous arms, yielding a 5'-phosphate and a 3'-hydroxyl group; requires a central core of homology in the junction. The consensus cleavage sequence is 5'-(A/T)TT(C/G)-3'. Cleavage occurs on the 3'-side of the TT dinucleotide at the point of strand exchange. HJ branch migration catalyzed by RuvA-RuvB allows RuvC to scan DNA until it finds its consensus sequence, where it cleaves and resolves the cruciform DNA. This is Crossover junction endodeoxyribonuclease RuvC from Wolinella succinogenes (strain ATCC 29543 / DSM 1740 / CCUG 13145 / JCM 31913 / LMG 7466 / NCTC 11488 / FDC 602W) (Vibrio succinogenes).